A 412-amino-acid chain; its full sequence is Light-independent protochlorophyllide reductase subunit N (412 aa).

Residues cysteine 16, cysteine 41, and cysteine 102 each contribute to the [4Fe-4S] cluster site.

The protein belongs to the BchN/ChlN family. In terms of assembly, protochlorophyllide reductase is composed of three subunits; ChlL, ChlN and ChlB. Forms a heterotetramer of two ChlB and two ChlN subunits. [4Fe-4S] cluster serves as cofactor.

It catalyses the reaction chlorophyllide a + oxidized 2[4Fe-4S]-[ferredoxin] + 2 ADP + 2 phosphate = protochlorophyllide a + reduced 2[4Fe-4S]-[ferredoxin] + 2 ATP + 2 H2O. It functions in the pathway porphyrin-containing compound metabolism; chlorophyll biosynthesis (light-independent). Component of the dark-operative protochlorophyllide reductase (DPOR) that uses Mg-ATP and reduced ferredoxin to reduce ring D of protochlorophyllide (Pchlide) to form chlorophyllide a (Chlide). This reaction is light-independent. The NB-protein (ChlN-ChlB) is the catalytic component of the complex. The chain is Light-independent protochlorophyllide reductase subunit N from Synechococcus sp. (strain RCC307).